An 861-amino-acid chain; its full sequence is Oleate activated transcription factor 3 (861 aa).

Positions 19 to 47 form a DNA-binding region, zn(2)-C6 fungal-type; sequence NCKKRKSKCDRTKPCGTCVRLGDVDSCVY. Residues 52-61 are compositionally biased toward polar residues; the sequence is SGQPESSPSL. Positions 52 to 99 are disordered; the sequence is SGQPESSPSLNDADPLRKQSTPAERISPGFIKKRRSSQTRQDEDHWQR.

Belongs to the OAF3 family.

The protein localises to the cytoplasm. Its subcellular location is the nucleus. It localises to the mitochondrion. Its function is as follows. Transcriptional inhibitor with a significantly increased number of target genes in response to oleate. The polypeptide is Oleate activated transcription factor 3 (OAF3) (Saccharomyces cerevisiae (strain JAY291) (Baker's yeast)).